We begin with the raw amino-acid sequence, 983 residues long: Bifunctional glutamine synthetase adenylyltransferase/adenylyl-removing enzyme (983 aa).

Residues 1–468 (MTVENAKALF…KQYAALFEQA (468 aa)) form an adenylyl removase region. The segment at 473–983 (AASGNLVFTG…FDKLVGHGAD (511 aa)) is adenylyl transferase.

This sequence belongs to the GlnE family. Mg(2+) serves as cofactor.

The enzyme catalyses [glutamine synthetase]-O(4)-(5'-adenylyl)-L-tyrosine + phosphate = [glutamine synthetase]-L-tyrosine + ADP. The catalysed reaction is [glutamine synthetase]-L-tyrosine + ATP = [glutamine synthetase]-O(4)-(5'-adenylyl)-L-tyrosine + diphosphate. Involved in the regulation of glutamine synthetase GlnA, a key enzyme in the process to assimilate ammonia. When cellular nitrogen levels are high, the C-terminal adenylyl transferase (AT) inactivates GlnA by covalent transfer of an adenylyl group from ATP to specific tyrosine residue of GlnA, thus reducing its activity. Conversely, when nitrogen levels are low, the N-terminal adenylyl removase (AR) activates GlnA by removing the adenylyl group by phosphorolysis, increasing its activity. The regulatory region of GlnE binds the signal transduction protein PII (GlnB) which indicates the nitrogen status of the cell. This is Bifunctional glutamine synthetase adenylyltransferase/adenylyl-removing enzyme from Brucella melitensis biotype 1 (strain ATCC 23456 / CCUG 17765 / NCTC 10094 / 16M).